Consider the following 388-residue polypeptide: Succinate--CoA ligase [ADP-forming] subunit beta (388 aa).

The region spanning 9 to 244 is the ATP-grasp domain; sequence KQLFAEFGLP…PSQEDKREAH (236 aa). ATP is bound by residues lysine 46, 53-55, glutamate 99, serine 102, and glutamate 107; that span reads GRG. Positions 199 and 213 each coordinate Mg(2+). Substrate contacts are provided by residues asparagine 264 and 321-323; that span reads GIV.

This sequence belongs to the succinate/malate CoA ligase beta subunit family. In terms of assembly, heterotetramer of two alpha and two beta subunits. Mg(2+) serves as cofactor.

The enzyme catalyses succinate + ATP + CoA = succinyl-CoA + ADP + phosphate. The catalysed reaction is GTP + succinate + CoA = succinyl-CoA + GDP + phosphate. It functions in the pathway carbohydrate metabolism; tricarboxylic acid cycle; succinate from succinyl-CoA (ligase route): step 1/1. Succinyl-CoA synthetase functions in the citric acid cycle (TCA), coupling the hydrolysis of succinyl-CoA to the synthesis of either ATP or GTP and thus represents the only step of substrate-level phosphorylation in the TCA. The beta subunit provides nucleotide specificity of the enzyme and binds the substrate succinate, while the binding sites for coenzyme A and phosphate are found in the alpha subunit. This chain is Succinate--CoA ligase [ADP-forming] subunit beta, found in Vibrio vulnificus (strain YJ016).